The primary structure comprises 264 residues: Phosphatidylglycerol--prolipoprotein diacylglyceryl transferase (264 aa).

The next 3 membrane-spanning stretches (helical) occupy residues 17–37 (LAIH…LWLA), 59–79 (LLFY…VLFY), and 95–115 (WKGG…MALF). Residue R142 coordinates a 1,2-diacyl-sn-glycero-3-phospho-(1'-sn-glycerol). 2 helical membrane-spanning segments follow: residues 205 to 225 (GQVS…AEYF) and 241 to 261 (MGQW…VWAG).

Belongs to the Lgt family.

It is found in the cell inner membrane. The enzyme catalyses L-cysteinyl-[prolipoprotein] + a 1,2-diacyl-sn-glycero-3-phospho-(1'-sn-glycerol) = an S-1,2-diacyl-sn-glyceryl-L-cysteinyl-[prolipoprotein] + sn-glycerol 1-phosphate + H(+). It functions in the pathway protein modification; lipoprotein biosynthesis (diacylglyceryl transfer). Functionally, catalyzes the transfer of the diacylglyceryl group from phosphatidylglycerol to the sulfhydryl group of the N-terminal cysteine of a prolipoprotein, the first step in the formation of mature lipoproteins. The polypeptide is Phosphatidylglycerol--prolipoprotein diacylglyceryl transferase (Methylibium petroleiphilum (strain ATCC BAA-1232 / LMG 22953 / PM1)).